A 324-amino-acid polypeptide reads, in one-letter code: tRNA N6-adenosine threonylcarbamoyltransferase (324 aa).

H107, H111, and Y127 together coordinate Fe cation. Residues 127-131, D159, G172, E176, and N257 contribute to the substrate site; that span reads YVSGG. Fe cation is bound at residue D285.

It belongs to the KAE1 / TsaD family. As to quaternary structure, monomer. Component of the KEOPS complex that consists of Kae1, Bud32, Cgi121 and Pcc1; the whole complex dimerizes. Fe(2+) is required as a cofactor.

It localises to the cytoplasm. The catalysed reaction is L-threonylcarbamoyladenylate + adenosine(37) in tRNA = N(6)-L-threonylcarbamoyladenosine(37) in tRNA + AMP + H(+). In terms of biological role, required for the formation of a threonylcarbamoyl group on adenosine at position 37 (t(6)A37) in tRNAs that read codons beginning with adenine. Is a component of the KEOPS complex that is probably involved in the transfer of the threonylcarbamoyl moiety of threonylcarbamoyl-AMP (TC-AMP) to the N6 group of A37. Kae1 likely plays a direct catalytic role in this reaction, but requires other protein(s) of the complex to fulfill this activity. In vitro, binds tRNA, ssRNA, both single- and double-stranded DNA, and exhibits a low ATPase activity. This chain is tRNA N6-adenosine threonylcarbamoyltransferase, found in Pyrococcus abyssi (strain GE5 / Orsay).